A 309-amino-acid polypeptide reads, in one-letter code: Dicarboxylate carrier UCP2 (309 aa).

At 1–16 (MVGFKATDVPPTATVK) the chain is on the mitochondrial intermembrane side. 3 Solcar repeats span residues 11–106 (PTAT…VKQF), 114–203 (AGIG…IKDA), and 212–297 (DDLP…LKRA). The interval 16-63 (KFLGAGTAACIADLITFPLDTAKVRLQIQGERQGPVRAAASAQYRGVL) is important for interaction with long-chain fatty acids. A helical membrane pass occupies residues 17–40 (FLGAGTAACIADLITFPLDTAKVR). Topologically, residues 41–77 (LQIQGERQGPVRAAASAQYRGVLCTILTMVRTEGPRS) are mitochondrial matrix. Residues 78–103 (LYSGLVAGLQRQMSFASVRIGLYDSV) form a helical membrane-spanning segment. Residues 104–119 (KQFYTKGSEHAGIGSR) are Mitochondrial intermembrane-facing. The helical transmembrane segment at 120-145 (LLAGSTTGALAVAVAQPTDVVKVRFQ) threads the bilayer. Topologically, residues 146–173 (AQARAGSGRRYQSTVDAYKTIAREEGFR) are mitochondrial matrix. Residues 174–199 (GLWKGTSPNVARNAIVNCAELVTYDL) form a helical membrane-spanning segment. The Mitochondrial intermembrane portion of the chain corresponds to 200 to 217 (IKDALLKANLMTDDLPCH). A helical membrane pass occupies residues 218–242 (FTSAFGAGFCTTVIASPVDVVKTRY). At 243-268 (MNSALGQYSSAGHCALTMLQKEGPRA) the chain is on the mitochondrial matrix side. A helical transmembrane segment spans residues 269-294 (FYKGFMPSFLRLGSWNVVMFVTYEQL). An important for interaction with long-chain fatty acids region spans residues 278–285 (LRLGSWNV). At 295–309 (KRALMAACTSREAPF) the chain is on the mitochondrial intermembrane side.

It belongs to the mitochondrial carrier (TC 2.A.29) family. In terms of assembly, homotetramer. Adopts an asymmetrical dimer of dimers functional form. Interacts with MICU1 (when methylated); leading to decrease the calcium sensitivity of MICU1.

The protein localises to the mitochondrion inner membrane. It carries out the reaction L-aspartate(out) + phosphate(in) + H(+)(in) = L-aspartate(in) + phosphate(out) + H(+)(out). The catalysed reaction is oxaloacetate(out) + phosphate(in) + H(+)(in) = oxaloacetate(in) + phosphate(out) + H(+)(out). It catalyses the reaction (S)-malate(out) + phosphate(in) + H(+)(in) = (S)-malate(in) + phosphate(out) + H(+)(out). The enzyme catalyses malonate(out) + phosphate(in) + H(+)(in) = malonate(in) + phosphate(out) + H(+)(out). It carries out the reaction sulfate(out) + phosphate(in) + H(+)(in) = sulfate(in) + phosphate(out) + H(+)(out). The catalysed reaction is (S)-malate(out) = (S)-malate(in). It catalyses the reaction L-aspartate(out) = L-aspartate(in). The enzyme catalyses phosphate(in) = phosphate(out). It carries out the reaction chloride(in) = chloride(out). The catalysed reaction is H(+)(in) = H(+)(out). It catalyses the reaction a long-chain fatty acid(out) = a long-chain fatty acid(in). In terms of biological role, antiporter that exports dicarboxylate intermediates of the Krebs cycle in exchange for phosphate plus a proton across the inner membrane of mitochondria, a process driven by mitochondrial motive force with an overall impact on glycolysis, glutaminolysis and glutathione-dependent redox balance. Continuous export of oxaloacetate and related four-carbon dicarboxylates from mitochondrial matrix into the cytosol negatively regulates the oxidation of acetyl-CoA substrates via the Krebs cycle lowering the ATP/ADP ratio and reactive oxygen species (ROS) production. May mediate inducible proton entry into the mitochondrial matrix affecting ATP turnover as a protection mechanism against oxidative stress. The proton currents are most likely associated with fatty acid flipping across the inner membrane of mitochondria in a metabolic process regulated by free fatty acids and purine nucleotides. Regulates the use of glucose as a source of energy. Required for glucose-induced DRP1-dependent mitochondrial fission and neuron activation in the ventromedial nucleus of the hypothalamus (VMH). This mitochondrial adaptation mechanism modulates the VMH pool of glucose-excited neurons with an impact on systemic glucose homeostasis. Regulates ROS levels and metabolic reprogramming of macrophages during the resolution phase of inflammation. Attenuates ROS production in response to IL33 to preserve the integrity of the Krebs cycle required for persistent production of itaconate and subsequent GATA3-dependent differentiation of inflammation-resolving alternatively activated macrophages. Can unidirectionally transport anions including L-malate, L-aspartate, phosphate and chloride ions. Does not mediate adaptive thermogenesis. The sequence is that of Dicarboxylate carrier UCP2 (UCP2) from Canis lupus familiaris (Dog).